Reading from the N-terminus, the 181-residue chain is MDELTAQALKAFTTRYCDAWQEKHGSWPLSEELYGVPSPCIISSTRDAVYWQPQPFEGEENVNAVERAFDIMVQPALHAFYTTQFAGDMPAQFADEKLTLLQTWSQDDFRRVQENLIGHLVTQKRLKLPPTLFIATQENELEVISVCNLSGEVIKETLGTRNRTVLAATLAEFLTQLNPLL.

This sequence belongs to the Syd family.

The protein resides in the cell inner membrane. In terms of biological role, interacts with the SecY protein in vivo. May bind preferentially to an uncomplexed state of SecY, thus functioning either as a chelating agent for excess SecY in the cell or as a regulatory factor that negatively controls the translocase function. This chain is Protein Syd, found in Salmonella agona (strain SL483).